The chain runs to 98 residues: Alpha-defensin 1 (98 aa).

The signal sequence occupies residues 1–19 (MRTLTLLTALLLLALQVQT). The propeptide occupies 20–63 (QSLEETADQVPAQDQPGAEAQDITISFAGDERSAREASKSLIGT). 3 cysteine pairs are disulfide-bonded: Cys66–Cys96, Cys68–Cys84, and Cys74–Cys95.

This sequence belongs to the alpha-defensin family. Paneth cells of the small bowel.

It is found in the secreted. Has broad-spectrum antimicrobial properties. The antimicrobial activity decreases in the present of salt in vitro. Binds anionic phospholipids, which leads to the aggregation of liposomes in vitro. Membrane permeabilization of the target cells is an essential part of the peptide's mode of antimicrobial activity. No hemolytic activity against sheep or horse erythrocytes. Has antibacterial activity against the bacterial horse pathogens Gram-positive R.equi ATCC 33701 P(-) (minimum bactericidal concentration or MBC=5 ug/ml) and R.equi ATCC 33701 P(+) (MBC=5 ug/ml), which are resistant against beta-lactam antibiotics. Also has antibacterial activity against highly infectious wild-type strain R.equi 85F P(+) (MBC=5 ug/ml), S.equi subsp. equi (MBC=5 ug/ml), S.equi subsp. zooepidemicus (MBC=5 ug/ml), S.dysgalactiae subsp. equisimilis (MBC=10 ug/ml), S.choleraesuis subsp. choleraesuis serovar Typhimurium (MBC=10 ug/ml), and P.multocida subsp. multocida (MBC=&gt;10 ug/ml). Probably contributes to the antimicrobial barrier function of the small bowel mucosa. The protein is Alpha-defensin 1 of Equus caballus (Horse).